The sequence spans 407 residues: Na(+)-translocating NADH-quinone reductase subunit F (407 aa).

A helical membrane pass occupies residues 3-23; it reads IILGVAMFTGIVMVLVLLILF. The region spanning 32-126 is the 2Fe-2S ferredoxin-type domain; sequence GDIAVEVNGD…NLKIELPEEI (95 aa). [2Fe-2S] cluster is bound by residues cysteine 69, cysteine 75, cysteine 78, and cysteine 110. Residues 129–269 form the FAD-binding FR-type domain; the sequence is VKKWECEVIS…SGPFGEFFAK (141 aa).

The protein belongs to the NqrF family. In terms of assembly, composed of six subunits; NqrA, NqrB, NqrC, NqrD, NqrE and NqrF. The cofactor is [2Fe-2S] cluster. Requires FAD as cofactor.

It localises to the cell inner membrane. It catalyses the reaction a ubiquinone + n Na(+)(in) + NADH + H(+) = a ubiquinol + n Na(+)(out) + NAD(+). NQR complex catalyzes the reduction of ubiquinone-1 to ubiquinol by two successive reactions, coupled with the transport of Na(+) ions from the cytoplasm to the periplasm. The first step is catalyzed by NqrF, which accepts electrons from NADH and reduces ubiquinone-1 to ubisemiquinone by a one-electron transfer pathway. The protein is Na(+)-translocating NADH-quinone reductase subunit F of Serratia proteamaculans (strain 568).